The primary structure comprises 144 residues: Large ribosomal subunit protein uL13 (144 aa).

This sequence belongs to the universal ribosomal protein uL13 family. Part of the 50S ribosomal subunit.

In terms of biological role, this protein is one of the early assembly proteins of the 50S ribosomal subunit, although it is not seen to bind rRNA by itself. It is important during the early stages of 50S assembly. In Nitrosospira multiformis (strain ATCC 25196 / NCIMB 11849 / C 71), this protein is Large ribosomal subunit protein uL13.